Reading from the N-terminus, the 247-residue chain is Carboxy-S-adenosyl-L-methionine synthase (247 aa).

S-adenosyl-L-methionine-binding positions include Tyr-40, 65-67, 90-91, 122-123, Asn-137, and Arg-204; these read GCS, DN, and DI.

The protein belongs to the class I-like SAM-binding methyltransferase superfamily. Cx-SAM synthase family. In terms of assembly, homodimer.

It catalyses the reaction prephenate + S-adenosyl-L-methionine = carboxy-S-adenosyl-L-methionine + 3-phenylpyruvate + H2O. Its function is as follows. Catalyzes the conversion of S-adenosyl-L-methionine (SAM) to carboxy-S-adenosyl-L-methionine (Cx-SAM). In Stutzerimonas stutzeri (strain A1501) (Pseudomonas stutzeri), this protein is Carboxy-S-adenosyl-L-methionine synthase.